A 515-amino-acid chain; its full sequence is Glucose-6-phosphate 1-dehydrogenase 6, cytoplasmic (515 aa).

NADP(+)-binding positions include 38 to 45 (GASGDLAK), Arg73, Tyr155, and Lys182. Residues Lys182, 212–216 (HYLGK), Glu250, and Asp269 contribute to the D-glucose 6-phosphate site. The active-site Proton acceptor is His274. Residue Lys357 participates in NADP(+) binding. Positions 360 and 365 each coordinate D-glucose 6-phosphate. Lys366, Arg370, and Arg394 together coordinate NADP(+). Gln396 contributes to the D-glucose 6-phosphate binding site. NADP(+) is bound by residues 402–404 (YMK), 422–424 (DLS), Arg488, and Trp510.

The protein belongs to the glucose-6-phosphate dehydrogenase family. Forms homodimer. In terms of tissue distribution, expressed in roots, leaves, stems, buds, flowers and siliques.

The protein resides in the cytoplasm. It is found in the cytosol. It catalyses the reaction D-glucose 6-phosphate + NADP(+) = 6-phospho-D-glucono-1,5-lactone + NADPH + H(+). It participates in carbohydrate degradation; pentose phosphate pathway; D-ribulose 5-phosphate from D-glucose 6-phosphate (oxidative stage): step 1/3. Regulated by metabolites. In terms of biological role, catalyzes the rate-limiting step of the oxidative pentose-phosphate pathway, which represents a route for the dissimilation of carbohydrates besides glycolysis. The main function of this enzyme is to provide reducing power (NADPH) and pentose phosphates for fatty acid and nucleic acid synthesis which are involved in membrane synthesis and cell division. The polypeptide is Glucose-6-phosphate 1-dehydrogenase 6, cytoplasmic (Arabidopsis thaliana (Mouse-ear cress)).